The chain runs to 74 residues: Large ribosomal subunit protein uL30 (74 aa).

Belongs to the universal ribosomal protein uL30 family. Part of the 50S ribosomal subunit.

In Koribacter versatilis (strain Ellin345), this protein is Large ribosomal subunit protein uL30.